We begin with the raw amino-acid sequence, 351 residues long: Photosystem II D2 protein (351 aa).

Residues 39 to 59 (CAYLALGAWFTGTTFVSSWYT) form a helical membrane-spanning segment. Position 116 (His116) interacts with chlorophyll a. A helical transmembrane segment spans residues 123 to 139 (GFCLRQFEIARLVGLRP). Gln128 and Asn141 together coordinate pheophytin a. The helical transmembrane segment at 151–164 (VFVSVFLLYPLGQA) threads the bilayer. His196 is a binding site for chlorophyll a. Residues 206–226 (GALLCAIHGATVENTLFEDGE) traverse the membrane as a helical segment. His213 and Phe260 together coordinate a plastoquinone. His213 lines the Fe cation pocket. His267 is a Fe cation binding site. A helical membrane pass occupies residues 277–293 (GLWVSSIGIVGLALNLR).

The protein belongs to the reaction center PufL/M/PsbA/D family. PSII is composed of 1 copy each of membrane proteins PsbA, PsbB, PsbC, PsbD, PsbE, PsbF, PsbH, PsbI, PsbJ, PsbK, PsbL, PsbM, PsbT, PsbY, PsbZ, Psb30/Ycf12, at least 3 peripheral proteins of the oxygen-evolving complex and a large number of cofactors. It forms dimeric complexes. The D1/D2 heterodimer binds P680, chlorophylls that are the primary electron donor of PSII, and subsequent electron acceptors. It shares a non-heme iron and each subunit binds pheophytin, quinone, additional chlorophylls, carotenoids and lipids. There is also a Cl(-1) ion associated with D1 and D2, which is required for oxygen evolution. The PSII complex binds additional chlorophylls, carotenoids and specific lipids. is required as a cofactor.

Its subcellular location is the plastid. It localises to the chloroplast thylakoid membrane. The enzyme catalyses 2 a plastoquinone + 4 hnu + 2 H2O = 2 a plastoquinol + O2. In terms of biological role, photosystem II (PSII) is a light-driven water:plastoquinone oxidoreductase that uses light energy to abstract electrons from H(2)O, generating O(2) and a proton gradient subsequently used for ATP formation. It consists of a core antenna complex that captures photons, and an electron transfer chain that converts photonic excitation into a charge separation. The D1/D2 (PsbA/PsbD) reaction center heterodimer binds P680, the primary electron donor of PSII as well as several subsequent electron acceptors. D2 is needed for assembly of a stable PSII complex. The sequence is that of Photosystem II D2 protein from Cyanidium caldarium (Red alga).